A 470-amino-acid chain; its full sequence is Dihydrolipoyl dehydrogenase (470 aa).

FAD contacts are provided by residues 39-47 (EKGNLGGVC), Lys56, and Ala119. Residues Cys47 and Cys52 are joined by a disulfide bond. Residues 183–187 (GGGYI), Glu206, and 271–274 (TVGR) contribute to the NAD(+) site. Positions 314 and 322 each coordinate FAD. His446 acts as the Proton acceptor in catalysis.

This sequence belongs to the class-I pyridine nucleotide-disulfide oxidoreductase family. Homodimer. Identified in a complex with PdhC. The cofactor is FAD.

It is found in the cytoplasm. It carries out the reaction N(6)-[(R)-dihydrolipoyl]-L-lysyl-[protein] + NAD(+) = N(6)-[(R)-lipoyl]-L-lysyl-[protein] + NADH + H(+). Lipoamide dehydrogenase is a component of the alpha-ketoacid dehydrogenase complexes. This chain is Dihydrolipoyl dehydrogenase (pdhD), found in Geobacillus stearothermophilus (Bacillus stearothermophilus).